Reading from the N-terminus, the 808-residue chain is DNA gyrase subunit B (808 aa).

One can recognise a Toprim domain in the interval 429–544 (SELFIVEGDS…KGYLYIAQPP (116 aa)). Mg(2+) contacts are provided by Glu435, Asp509, and Asp511.

Belongs to the type II topoisomerase GyrB family. As to quaternary structure, heterotetramer, composed of two GyrA and two GyrB chains. In the heterotetramer, GyrA contains the active site tyrosine that forms a transient covalent intermediate with DNA, while GyrB binds cofactors and catalyzes ATP hydrolysis. The cofactor is Mg(2+). Mn(2+) serves as cofactor. Requires Ca(2+) as cofactor.

The protein resides in the cytoplasm. It catalyses the reaction ATP-dependent breakage, passage and rejoining of double-stranded DNA.. In terms of biological role, a type II topoisomerase that negatively supercoils closed circular double-stranded (ds) DNA in an ATP-dependent manner to modulate DNA topology and maintain chromosomes in an underwound state. Negative supercoiling favors strand separation, and DNA replication, transcription, recombination and repair, all of which involve strand separation. Also able to catalyze the interconversion of other topological isomers of dsDNA rings, including catenanes and knotted rings. Type II topoisomerases break and join 2 DNA strands simultaneously in an ATP-dependent manner. The chain is DNA gyrase subunit B from Rickettsia felis (strain ATCC VR-1525 / URRWXCal2) (Rickettsia azadi).